An 89-amino-acid chain; its full sequence is Small ribosomal subunit protein uS15 (89 aa).

Belongs to the universal ribosomal protein uS15 family. Part of the 30S ribosomal subunit. Forms a bridge to the 50S subunit in the 70S ribosome, contacting the 23S rRNA.

Functionally, one of the primary rRNA binding proteins, it binds directly to 16S rRNA where it helps nucleate assembly of the platform of the 30S subunit by binding and bridging several RNA helices of the 16S rRNA. In terms of biological role, forms an intersubunit bridge (bridge B4) with the 23S rRNA of the 50S subunit in the ribosome. This Caulobacter sp. (strain K31) protein is Small ribosomal subunit protein uS15.